We begin with the raw amino-acid sequence, 431 residues long: Histidinol dehydrogenase (431 aa).

Positions 127, 189, and 212 each coordinate NAD(+). 3 residues coordinate substrate: S237, Q259, and H262. Residues Q259 and H262 each coordinate Zn(2+). Catalysis depends on proton acceptor residues E326 and H327. H327, D360, E414, and H419 together coordinate substrate. D360 contributes to the Zn(2+) binding site. H419 contributes to the Zn(2+) binding site.

Belongs to the histidinol dehydrogenase family. It depends on Zn(2+) as a cofactor.

The enzyme catalyses L-histidinol + 2 NAD(+) + H2O = L-histidine + 2 NADH + 3 H(+). Its pathway is amino-acid biosynthesis; L-histidine biosynthesis; L-histidine from 5-phospho-alpha-D-ribose 1-diphosphate: step 9/9. Functionally, catalyzes the sequential NAD-dependent oxidations of L-histidinol to L-histidinaldehyde and then to L-histidine. This chain is Histidinol dehydrogenase, found in Xylella fastidiosa (strain 9a5c).